We begin with the raw amino-acid sequence, 538 residues long: Chaperonin GroEL 1 (538 aa).

Residues 29-32 (TLGP), 86-90 (DGTTT), Gly413, 478-480 (NAA), and Asp494 contribute to the ATP site.

It belongs to the chaperonin (HSP60) family. In terms of assembly, forms a cylinder of 14 subunits composed of two heptameric rings stacked back-to-back. Interacts with the co-chaperonin GroES.

Its subcellular location is the cytoplasm. The enzyme catalyses ATP + H2O + a folded polypeptide = ADP + phosphate + an unfolded polypeptide.. In terms of biological role, together with its co-chaperonin GroES, plays an essential role in assisting protein folding. The GroEL-GroES system forms a nano-cage that allows encapsulation of the non-native substrate proteins and provides a physical environment optimized to promote and accelerate protein folding. This chain is Chaperonin GroEL 1, found in Corynebacterium glutamicum (strain ATCC 13032 / DSM 20300 / JCM 1318 / BCRC 11384 / CCUG 27702 / LMG 3730 / NBRC 12168 / NCIMB 10025 / NRRL B-2784 / 534).